We begin with the raw amino-acid sequence, 129 residues long: MDTLKLEIVTPEGLIFQGDVKSVTFPGEEGEFGVLPKHASLLSLLKPGVIEIELPDGKKESIVINWGHVNVSENQATALVEGAVPLEGTTESEIAKKIEEAKKLIESASENKAALATVEARIEKAAKIV.

It belongs to the ATPase epsilon chain family. In terms of assembly, F-type ATPases have 2 components, CF(1) - the catalytic core - and CF(0) - the membrane proton channel. CF(1) has five subunits: alpha(3), beta(3), gamma(1), delta(1), epsilon(1). CF(0) has three main subunits: a, b and c.

Its subcellular location is the cell inner membrane. In terms of biological role, produces ATP from ADP in the presence of a proton gradient across the membrane. The protein is ATP synthase epsilon chain of Nitratiruptor sp. (strain SB155-2).